The primary structure comprises 259 residues: Tonin (259 aa).

Positions 1–18 (MWLQILSLVLSVGRIDAA) are cleaved as a signal peptide. Positions 19–24 (PPGQSR) are cleaved as a propeptide — activation peptide. Residues 25–256 (IVGGYKCEKN…FTSWIKKVMK (232 aa)) form the Peptidase S1 domain. Cystine bridges form between C31–C171, C48–C64, C150–C217, C182–C196, and C207–C232. H63 functions as the Charge relay system in the catalytic mechanism. H63 lines the Zn(2+) pocket. An N-linked (GlcNAc...) asparagine glycan is attached at N106. Zn(2+) is bound by residues H113 and H115. D118 acts as the Charge relay system in catalysis. N189 carries N-linked (GlcNAc...) asparagine glycosylation. The Charge relay system role is filled by S211.

It belongs to the peptidase S1 family. Kallikrein subfamily. As to quaternary structure, monomer. Requires Zn(2+) as cofactor. In terms of tissue distribution, found in submaxillary gland.

It carries out the reaction Preferential cleavage of Arg-|-Xaa bonds in small molecule substrates. Highly selective action to release kallidin (lysyl-bradykinin) from kininogen involves hydrolysis of Met-|-Xaa or Leu-|-Xaa.. This protein has both trypsin- and chymotrypsin-like activities, being able to release angiotensin II from angiotensin I or angiotensinogen. This Rattus norvegicus (Rat) protein is Tonin (Klk2).